A 291-amino-acid chain; its full sequence is MKIAVYGKGGIGKSTTSCNISVALARRGQKVLQIGCDPKHDSTFTLTGFLIPTIIDTLQSKDYHYEDIWPEDVIHKGYGGVDCVEAGGPPAGAGCGGYVVGETVKLLKELNAFYEYDIILFDVLGDVVCGGFAAPLNYADYCVIITDNGFDALFAANRITASIREKARTHPLRLAGLVGNRTSKRDLIHKYVEACPMPVIEVLPIIEDIRVSRVKGKTLFEMVGSEPSLNYVCKYYLDIADQILSQPEGIVPKEIPDRELFSLLSDLYLNPIGGGGQKKKNQENLLGFTRI.

ATP is bound by residues 10–15 (GIGKST) and Lys39. Ser14 is a Mg(2+) binding site. 2 residues coordinate [4Fe-4S] cluster: Cys95 and Cys129. 180-181 (NR) provides a ligand contact to ATP.

It belongs to the NifH/BchL/ChlL family. In terms of assembly, homodimer. Protochlorophyllide reductase is composed of three subunits; ChlL, ChlN and ChlB. The cofactor is [4Fe-4S] cluster.

The protein resides in the plastid. The protein localises to the chloroplast. The catalysed reaction is chlorophyllide a + oxidized 2[4Fe-4S]-[ferredoxin] + 2 ADP + 2 phosphate = protochlorophyllide a + reduced 2[4Fe-4S]-[ferredoxin] + 2 ATP + 2 H2O. Its pathway is porphyrin-containing compound metabolism; chlorophyll biosynthesis (light-independent). Component of the dark-operative protochlorophyllide reductase (DPOR) that uses Mg-ATP and reduced ferredoxin to reduce ring D of protochlorophyllide (Pchlide) to form chlorophyllide a (Chlide). This reaction is light-independent. The L component serves as a unique electron donor to the NB-component of the complex, and binds Mg-ATP. The sequence is that of Light-independent protochlorophyllide reductase iron-sulfur ATP-binding protein from Larix decidua (European larch).